The sequence spans 219 residues: Ribose-5-phosphate isomerase A (219 aa).

Substrate contacts are provided by residues 28–31 (TGST), 81–84 (DGAD), and 94–97 (KGGG). The Proton acceptor role is filled by E103. K121 serves as a coordination point for substrate.

Belongs to the ribose 5-phosphate isomerase family. Homodimer.

It carries out the reaction aldehydo-D-ribose 5-phosphate = D-ribulose 5-phosphate. Its pathway is carbohydrate degradation; pentose phosphate pathway; D-ribose 5-phosphate from D-ribulose 5-phosphate (non-oxidative stage): step 1/1. Catalyzes the reversible conversion of ribose-5-phosphate to ribulose 5-phosphate. The protein is Ribose-5-phosphate isomerase A of Salmonella arizonae (strain ATCC BAA-731 / CDC346-86 / RSK2980).